Consider the following 568-residue polypeptide: Probable inactive 1-aminocyclopropane-1-carboxylate synthase-like protein 2 (568 aa).

The tract at residues 1 to 21 is disordered; the sequence is MSHRSDTLPVPSGQRRGRVPR. The residue at position 395 (Lys395) is an N6-(pyridoxal phosphate)lysine.

Belongs to the class-I pyridoxal-phosphate-dependent aminotransferase family.

The sequence is that of Probable inactive 1-aminocyclopropane-1-carboxylate synthase-like protein 2 (ACCSL) from Homo sapiens (Human).